A 213-amino-acid chain; its full sequence is Probable transaldolase (213 aa).

The Schiff-base intermediate with substrate role is filled by Lys-83.

It belongs to the transaldolase family. Type 3B subfamily.

It is found in the cytoplasm. The enzyme catalyses D-sedoheptulose 7-phosphate + D-glyceraldehyde 3-phosphate = D-erythrose 4-phosphate + beta-D-fructose 6-phosphate. Its pathway is carbohydrate degradation; pentose phosphate pathway; D-glyceraldehyde 3-phosphate and beta-D-fructose 6-phosphate from D-ribose 5-phosphate and D-xylulose 5-phosphate (non-oxidative stage): step 2/3. Its function is as follows. Transaldolase is important for the balance of metabolites in the pentose-phosphate pathway. This is Probable transaldolase from Syntrophomonas wolfei subsp. wolfei (strain DSM 2245B / Goettingen).